Consider the following 443-residue polypeptide: MDEDCEVTQLQEQSCWATLPDVCLRRVFWWLGDRDRSRAALVCRKWNQIMYSADLWRYRTITFSGRPSRVHASEFESALWYIKKFGRYLEHLEIKFLNPYNAVLTKKFQVTMRGLLSCLGKSNNRLRSLSIQHLELDRLVWRNSIRGSLIKSLSFFLKKMGKHLDHLSLKGARLTVEQGCHILNSLSYMQNENMASELNIEDFFSHHLAVYGSSQFNKAMATFRNLTFLTLNYNCISDELLETLSENNAGTLRTMNIKCHVHDPHGQVVWGMSWAKLARQASNLKVNFFFERVMKYERLARILLQEIPVRSISLRSCYFSDPDWSMRPTLTDLLPTFRNTLQKLTFEFNNNHESLDEQLHLLILACRKLFYFKIWAFLDVKFVERILKSQEEGQCSLHTLKVRIYTNRYETNEEDRTLREIYRKYRKLIDSELNYFVVAYPMM.

Residues 13–59 form the F-box domain; sequence QSCWATLPDVCLRRVFWWLGDRDRSRAALVCRKWNQIMYSADLWRYR.

As to quaternary structure, directly interacts with SKP1 and CUL1.

In terms of biological role, substrate-recognition component of the SCF (SKP1-CUL1-F-box protein)-type E3 ubiquitin ligase complex. This is F-box only protein 39 (Fbxo39) from Mus musculus (Mouse).